The primary structure comprises 201 residues: 3-isopropylmalate dehydratase small subunit (201 aa).

The protein belongs to the LeuD family. LeuD type 1 subfamily. As to quaternary structure, heterodimer of LeuC and LeuD.

It catalyses the reaction (2R,3S)-3-isopropylmalate = (2S)-2-isopropylmalate. Its pathway is amino-acid biosynthesis; L-leucine biosynthesis; L-leucine from 3-methyl-2-oxobutanoate: step 2/4. Its function is as follows. Catalyzes the isomerization between 2-isopropylmalate and 3-isopropylmalate, via the formation of 2-isopropylmaleate. The protein is 3-isopropylmalate dehydratase small subunit of Cronobacter sakazakii (strain ATCC BAA-894) (Enterobacter sakazakii).